We begin with the raw amino-acid sequence, 526 residues long: Bifunctional purine biosynthesis protein PurH (526 aa).

Residues 1–145 (MSKAPLALLS…KNHAHVGIVT (145 aa)) form the MGS-like domain.

Belongs to the PurH family.

It catalyses the reaction (6R)-10-formyltetrahydrofolate + 5-amino-1-(5-phospho-beta-D-ribosyl)imidazole-4-carboxamide = 5-formamido-1-(5-phospho-D-ribosyl)imidazole-4-carboxamide + (6S)-5,6,7,8-tetrahydrofolate. The catalysed reaction is IMP + H2O = 5-formamido-1-(5-phospho-D-ribosyl)imidazole-4-carboxamide. It functions in the pathway purine metabolism; IMP biosynthesis via de novo pathway; 5-formamido-1-(5-phospho-D-ribosyl)imidazole-4-carboxamide from 5-amino-1-(5-phospho-D-ribosyl)imidazole-4-carboxamide (10-formyl THF route): step 1/1. The protein operates within purine metabolism; IMP biosynthesis via de novo pathway; IMP from 5-formamido-1-(5-phospho-D-ribosyl)imidazole-4-carboxamide: step 1/1. This is Bifunctional purine biosynthesis protein PurH from Psychrobacter cryohalolentis (strain ATCC BAA-1226 / DSM 17306 / VKM B-2378 / K5).